The sequence spans 520 residues: Pantetheine hydrolase VNN2 (520 aa).

A signal peptide spans 1 to 22; the sequence is MVTSSFPISVAVFALITLQVGT. In terms of domain architecture, CN hydrolase spans 31–306; sequence YEHAVILPNK…GKLLLSEVDS (276 aa). Asparagine 39 carries N-linked (GlcNAc...) asparagine glycosylation. Glutamate 80 functions as the Proton acceptor in the catalytic mechanism. Lysine 179 serves as the catalytic Proton donor. Catalysis depends on cysteine 211, which acts as the Nucleophile. N-linked (GlcNAc...) asparagine glycosylation is found at asparagine 273, asparagine 347, asparagine 357, asparagine 411, and asparagine 468. Cysteine 493 carries GPI-anchor amidated cysteine lipidation. Positions 494 to 520 are cleaved as a propeptide — removed in mature form; it reads GTSNSAITYLLIFILLMIIALQNIVML.

This sequence belongs to the carbon-nitrogen hydrolase superfamily. BTD/VNN family. As to expression, widely expressed with higher expression in spleen and blood.

Its subcellular location is the cell membrane. It carries out the reaction (R)-pantetheine + H2O = cysteamine + (R)-pantothenate. In terms of biological role, amidohydrolase that hydrolyzes specifically one of the carboamide linkages in D-pantetheine thus recycling pantothenic acid (vitamin B5) and releasing cysteamine. Involved in the thymus homing of bone marrow cells. May regulate beta-2 integrin-mediated cell adhesion, migration and motility of neutrophil. The protein is Pantetheine hydrolase VNN2 of Homo sapiens (Human).